The following is a 335-amino-acid chain: MKCTSKIYTDNDANLDLIKGKRIAVLGYGSQGRAWAQNLRDSGLNVVVGLEREGKSWELAKSDGITPLHTKDAVKDADIIIFLVPDMVQRTLWLESVQPYMKKGADLVFAHGFNIHYKLIDPPKDSDVYMIAPKGPGPTVREYYKAGGGVPALVAVHQDVSGTALHKALAIAKGIGATRAGVIPTTFKEETETDLFGEQVILVGGIMELMRAAFETLVEEGYQPEVAYFETINELKMLVDLVYEKGISGMLKAVSDTAKYGGMTVGKFVIDESVRKRMKEALQRIKSGKFAEEWVEEYGRGMPTVVNGLSNVQNSLEEKIGNQLRDLVQKGKPKS.

The region spanning 5-185 is the KARI N-terminal Rossmann domain; that stretch reads SKIYTDNDAN…GATRAGVIPT (181 aa). Residues 28 to 31, Ser-56, and 86 to 89 each bind NADP(+); these read YGSQ and DMVQ. His-111 is a catalytic residue. An NADP(+)-binding site is contributed by Gly-137. A KARI C-terminal knotted domain is found at 186-331; sequence TFKEETETDL…NQLRDLVQKG (146 aa). The Mg(2+) site is built by Asp-194, Glu-198, Glu-230, and Glu-234. A substrate-binding site is contributed by Ser-255.

It belongs to the ketol-acid reductoisomerase family. Requires Mg(2+) as cofactor.

The catalysed reaction is (2R)-2,3-dihydroxy-3-methylbutanoate + NADP(+) = (2S)-2-acetolactate + NADPH + H(+). It carries out the reaction (2R,3R)-2,3-dihydroxy-3-methylpentanoate + NADP(+) = (S)-2-ethyl-2-hydroxy-3-oxobutanoate + NADPH + H(+). It functions in the pathway amino-acid biosynthesis; L-isoleucine biosynthesis; L-isoleucine from 2-oxobutanoate: step 2/4. It participates in amino-acid biosynthesis; L-valine biosynthesis; L-valine from pyruvate: step 2/4. In terms of biological role, involved in the biosynthesis of branched-chain amino acids (BCAA). Catalyzes an alkyl-migration followed by a ketol-acid reduction of (S)-2-acetolactate (S2AL) to yield (R)-2,3-dihydroxy-isovalerate. In the isomerase reaction, S2AL is rearranged via a Mg-dependent methyl migration to produce 3-hydroxy-3-methyl-2-ketobutyrate (HMKB). In the reductase reaction, this 2-ketoacid undergoes a metal-dependent reduction by NADPH to yield (R)-2,3-dihydroxy-isovalerate. The chain is Ketol-acid reductoisomerase (NADP(+)) from Saccharolobus solfataricus (strain ATCC 35092 / DSM 1617 / JCM 11322 / P2) (Sulfolobus solfataricus).